Consider the following 259-residue polypeptide: Dihydroorotate dehydrogenase B (NAD(+)), electron transfer subunit (259 aa).

The FAD-binding FR-type domain occupies 2 to 102 (MQKQNMIVVN…LGPLGHGFPL (101 aa)). FAD is bound by residues 53–56 (RPIS), 70–72 (LYR), and 77–78 (GT). [2Fe-2S] cluster-binding residues include Cys221, Cys226, Cys229, and Cys246.

This sequence belongs to the PyrK family. Heterotetramer of 2 PyrK and 2 PyrD type B subunits. It depends on [2Fe-2S] cluster as a cofactor. The cofactor is FAD.

It functions in the pathway pyrimidine metabolism; UMP biosynthesis via de novo pathway; orotate from (S)-dihydroorotate (NAD(+) route): step 1/1. Functionally, responsible for channeling the electrons from the oxidation of dihydroorotate from the FMN redox center in the PyrD type B subunit to the ultimate electron acceptor NAD(+). This Bacillus cereus (strain B4264) protein is Dihydroorotate dehydrogenase B (NAD(+)), electron transfer subunit.